Consider the following 327-residue polypeptide: 2-oxoglutarate-dependent dioxygenase traH (327 aa).

In terms of domain architecture, Fe2OG dioxygenase spans 183–290; it reads TTDAAMFLKL…YAVPAFWHGD (108 aa). Residues His211, Asp213, and His270 each coordinate Fe cation. Arg280 serves as a coordination point for 2-oxoglutarate.

It belongs to the iron/ascorbate-dependent oxidoreductase family. Fe(2+) serves as cofactor.

Its pathway is secondary metabolite biosynthesis. Its function is as follows. 2-oxoglutarate-dependent dioxygenase; part of the tra gene cluster that produces terrestric acid. The clavatol biosynthesis cluster cla and the terrestric acid cluster tra are both involved in the production of peniphenones and penilactones. The non-reducing PKS claF is responsible for the formation of clavatol from successive condensations of 3 malonyl-CoA units, presumably with a simple acetyl-CoA starter unit, and 2 methylation steps. The esterase claE probably collaborates with claF by catalyzing the hydrolysis of ACP-bound acyl intermediates to free the ACP from stalled intermediates. The clavatol oxidase claD then converts clavatol to hydroxyclavatol. Spontaneous dehydration of hydroxyclavatol leads to the accumulation of the highly active ortho-quinone methide. On the other hand, the PKS-NRPS hybrid traA is involved in the formation of crustosic acid, with the help of traB and traD. The polyketide synthase module (PKS) of traA is responsible for the synthesis of the polyketide backbone via the condensation of an acetyl-CoA starter unit with 3 malonyl-CoA units. The downstream nonribosomal peptide synthetase (NRPS) module then amidates the carboxyl end of the polyketide with L-malic acid. Because traA lacks a designated enoylreductase (ER) domain, the required activity is provided the enoyl reductase traG. Crustosic acid undergoes decarboxylation and isomerization to the terrestric acid, catalyzed by the 2-oxoglutarate-dependent dioxygenase traH. Both acids are further converted to the 2 gamma-butyrolactones (R)-5-methyltetronic acid and (S)-5-carboxylmethyltetronic acid, with involvement of the cytochrome P450 monooxygenase claJ. Spontaneous addition of the methide to these gamma-butyrolactones leads to peniphenone D and penilactone D, which undergo again stereospecific attacking by methide to give penilactones A and B. In Penicillium crustosum (Blue mold fungus), this protein is 2-oxoglutarate-dependent dioxygenase traH.